A 124-amino-acid polypeptide reads, in one-letter code: Testis-expressed protein 54 (124 aa).

Residues 1-10 show a composition bias toward basic and acidic residues; that stretch reads MGCCQDKDFE. 2 disordered regions span residues 1-77 and 90-124; these read MGCC…SNES and FGRR…PEKG. A compositionally biased stretch (acidic residues) spans 11 to 30; sequence MSDEQSKEEESEDGREDETT. 2 stretches are compositionally biased toward basic and acidic residues: residues 34–50 and 101–124; these read RGPR…RGEL and RQPD…PEKG.

In terms of tissue distribution, expressed in Testis.

The protein is Testis-expressed protein 54 of Homo sapiens (Human).